Reading from the N-terminus, the 121-residue chain is Large ribosomal subunit protein bL19 (121 aa).

It belongs to the bacterial ribosomal protein bL19 family.

Functionally, this protein is located at the 30S-50S ribosomal subunit interface and may play a role in the structure and function of the aminoacyl-tRNA binding site. The polypeptide is Large ribosomal subunit protein bL19 (Amoebophilus asiaticus (strain 5a2)).